Here is a 268-residue protein sequence, read N- to C-terminus: Protein APE_1980.1 (268 aa).

Belongs to the CinA family.

This chain is Protein APE_1980.1, found in Aeropyrum pernix (strain ATCC 700893 / DSM 11879 / JCM 9820 / NBRC 100138 / K1).